The chain runs to 776 residues: Endonuclease MutS2 (776 aa).

ATP is bound at residue 330–337 (GPNTGGKT). Residues 701-776 (LDLRGMRYEE…GSGATIAILK (76 aa)) form the Smr domain.

The protein belongs to the DNA mismatch repair MutS family. MutS2 subfamily. In terms of assembly, homodimer. Binds to stalled ribosomes, contacting rRNA.

Functionally, endonuclease that is involved in the suppression of homologous recombination and thus may have a key role in the control of bacterial genetic diversity. In terms of biological role, acts as a ribosome collision sensor, splitting the ribosome into its 2 subunits. Detects stalled/collided 70S ribosomes which it binds and splits by an ATP-hydrolysis driven conformational change. Acts upstream of the ribosome quality control system (RQC), a ribosome-associated complex that mediates the extraction of incompletely synthesized nascent chains from stalled ribosomes and their subsequent degradation. Probably generates substrates for RQC. This chain is Endonuclease MutS2, found in Lactococcus lactis subsp. lactis (strain IL1403) (Streptococcus lactis).